The primary structure comprises 275 residues: Polyamine aminopropyltransferase (275 aa).

In terms of domain architecture, PABS spans 2-235 (ELWFTEKQTK…GLWTFTIGSK (234 aa)). An S-methyl-5'-thioadenosine-binding site is contributed by Gln31. Positions 62 and 86 each coordinate spermidine. Residues Glu106 and 137 to 138 (DG) each bind S-methyl-5'-thioadenosine. Residue Asp155 is the Proton acceptor of the active site. 155-158 (DSTE) provides a ligand contact to spermidine. Pro162 is a binding site for S-methyl-5'-thioadenosine.

It belongs to the spermidine/spermine synthase family. As to quaternary structure, homodimer or homotetramer.

The protein resides in the cytoplasm. The enzyme catalyses S-adenosyl 3-(methylsulfanyl)propylamine + putrescine = S-methyl-5'-thioadenosine + spermidine + H(+). The protein operates within amine and polyamine biosynthesis; spermidine biosynthesis; spermidine from putrescine: step 1/1. In terms of biological role, catalyzes the irreversible transfer of a propylamine group from the amino donor S-adenosylmethioninamine (decarboxy-AdoMet) to putrescine (1,4-diaminobutane) to yield spermidine. The protein is Polyamine aminopropyltransferase of Bacillus cereus (strain ATCC 10987 / NRS 248).